Reading from the N-terminus, the 500-residue chain is FAD-linked oxidoreductase chyH (500 aa).

The signal sequence occupies residues 1 to 20; sequence MRLQAVTAVAAWAVASACQS. The FAD-binding PCMH-type domain occupies 65–235; the sequence is LEVPTVNIVI…TSVTSKTYDI (171 aa). Residues Asn199, Asn266, Asn275, and Asn383 are each glycosylated (N-linked (GlcNAc...) asparagine).

Belongs to the oxygen-dependent FAD-linked oxidoreductase family. The cofactor is FAD.

It functions in the pathway pigment biosynthesis. Functionally, FAD-linked oxidoreductase; part of the gene cluster that mediates the biosynthesis of the yellow pigment chrysogine. the NRPS chyA mediates the condensation of anthranilic acid and alanine into the intermediate 2-(2-aminopropanamido)benzoic acid. The remainder of the pathway is highly branched yielding at least 13 chrysogine-related compounds. The malonyl transferase chyE converts 2-(2-aminopropanamido)benzoic acid and 2-(2-aminopropanamido)benzamidine into 2-(2-(2-carboxyacetamido)propanamido)benzoic acid and 3-((1-((2-carbamoylphenyl)amino)-1-oxopropan-2-yl)amino)-3-oxopropanoic acid, respectively. ChyD is an amidase, being responsible for the amidation of the carboxylic acid moiety of 2-(2-aminopropanamido)benzoic acid, 2-(2-(2-carboxyacetamido)propanamido)benzoic acid and 2-(2-((4-amino-1-carboxy-4-oxobutyl)amino)propanamido)benzoic acid. ChyC is involved in the same reactions as ChyD, but plays a more minor role in the amidation reactions compared to chyD. The oxidoreductases chyH and chyM are involved in oxidation reactions that form N-pyruvoylanthranilamide from 2-(2-aminopropanamido)benzamidine and (1-((2-carbamoylphenyl)amino)-1-oxopropan-2-yl)glutamine, respectively. N-pyruvoylanthranilamide is further converted via two further branches in the pathway, yielding chrysogine and additional chrysogine-related coumpounds. Chrysogine is likely formed by a spontaneous ring closure from N-pyruvoylanthranilamide. The protein is FAD-linked oxidoreductase chyH of Penicillium rubens (strain ATCC 28089 / DSM 1075 / NRRL 1951 / Wisconsin 54-1255) (Penicillium chrysogenum).